The sequence spans 101 residues: DNA-binding protein Fis (101 aa).

A DNA-binding region (H-T-H motif) is located at residues 77-96 (QTRAANMLGINRGTLRKKLK).

The protein belongs to the transcriptional regulatory Fis family. As to quaternary structure, homodimer.

Its function is as follows. Activates ribosomal RNA transcription. Plays a direct role in upstream activation of rRNA promoters. This Shewanella loihica (strain ATCC BAA-1088 / PV-4) protein is DNA-binding protein Fis.